An 82-amino-acid polypeptide reads, in one-letter code: QSGKDATIVELTNDNDGLGQYNFAYRTSDGIARQEQGALKNAGSENEAIEVQGSYTYKGVDGKDYTVTFVANENGYQPRVQS.

Pyrrolidone carboxylic acid is present on Gln1. The Chitin-binding type R&amp;R domain maps to 18-82 (LGQYNFAYRT…ENGYQPRVQS (65 aa)).

Component of the soft endocuticle of desert locust. This chain is Endocuticle structural glycoprotein SgAbd-5, found in Schistocerca gregaria (Desert locust).